The chain runs to 360 residues: Phospho-N-acetylmuramoyl-pentapeptide-transferase (360 aa).

10 consecutive transmembrane segments (helical) span residues 21 to 41 (YITF…LWIG), 73 to 93 (TMGG…WADL), 98 to 118 (VWFV…DDYW), 132 to 152 (WKYF…YAVG), 168 to 188 (FMPQ…VGTS), 199 to 219 (GLAI…AWAT), 236 to 256 (AGEL…FLWY), 263 to 283 (VFMG…IAVL), 288 to 308 (LLLV…ILQV), and 338 to 358 (VIVR…VTLK).

It belongs to the glycosyltransferase 4 family. MraY subfamily. Requires Mg(2+) as cofactor.

It is found in the cell inner membrane. It carries out the reaction UDP-N-acetyl-alpha-D-muramoyl-L-alanyl-gamma-D-glutamyl-meso-2,6-diaminopimeloyl-D-alanyl-D-alanine + di-trans,octa-cis-undecaprenyl phosphate = di-trans,octa-cis-undecaprenyl diphospho-N-acetyl-alpha-D-muramoyl-L-alanyl-D-glutamyl-meso-2,6-diaminopimeloyl-D-alanyl-D-alanine + UMP. Its pathway is cell wall biogenesis; peptidoglycan biosynthesis. Functionally, catalyzes the initial step of the lipid cycle reactions in the biosynthesis of the cell wall peptidoglycan: transfers peptidoglycan precursor phospho-MurNAc-pentapeptide from UDP-MurNAc-pentapeptide onto the lipid carrier undecaprenyl phosphate, yielding undecaprenyl-pyrophosphoryl-MurNAc-pentapeptide, known as lipid I. The polypeptide is Phospho-N-acetylmuramoyl-pentapeptide-transferase (Actinobacillus pleuropneumoniae serotype 3 (strain JL03)).